A 433-amino-acid chain; its full sequence is Oxaloacetate decarboxylase beta chain 2 (433 aa).

The next 9 membrane-spanning stretches (helical) occupy residues 13–35 (LMHLGAGQAIMLLVSLLLLWLAI), 42–64 (LLLLPIGFGGLLSNIPEAGLALT), 125–147 (LFYKVAIGSGVAPLVIFMGVGAM), 160–182 (LLLGAAAQFGIFATVLGALTLNY), 214–236 (LAPELLGAIAVAAYSYMALVPLI), 266–288 (ILFPVVLLMLVALLLPDAAPLLG), 308–327 (TVQNGLINIVTIFLGLSVGA), 339–361 (TLGILLLGVIAFGIGTAAGVLMA), and 413–432 (VAGVIGSAIAAGVMLKYVLA).

This sequence belongs to the GcdB/MmdB/OadB family. In terms of assembly, heterotrimer of an alpha, a beta and a gamma subunit. Requires Na(+) as cofactor.

It localises to the cell membrane. It catalyses the reaction oxaloacetate + 2 Na(+)(in) + H(+) = pyruvate + 2 Na(+)(out) + CO2. Catalyzes the decarboxylation of oxaloacetate coupled to Na(+) translocation. The polypeptide is Oxaloacetate decarboxylase beta chain 2 (oadB2) (Salmonella typhimurium (strain LT2 / SGSC1412 / ATCC 700720)).